The chain runs to 306 residues: N-acetylmuramic acid 6-phosphate etherase (306 aa).

The 164-residue stretch at 55–218 folds into the SIS domain; it reads AAATLLAGGR…STGAMIKIGK (164 aa). Catalysis depends on glutamate 83, which acts as the Proton donor. Glutamate 114 is an active-site residue.

The protein belongs to the GCKR-like family. MurNAc-6-P etherase subfamily. Homodimer.

The enzyme catalyses N-acetyl-D-muramate 6-phosphate + H2O = N-acetyl-D-glucosamine 6-phosphate + (R)-lactate. Its pathway is amino-sugar metabolism; 1,6-anhydro-N-acetylmuramate degradation. It functions in the pathway amino-sugar metabolism; N-acetylmuramate degradation. The protein operates within cell wall biogenesis; peptidoglycan recycling. In terms of biological role, specifically catalyzes the cleavage of the D-lactyl ether substituent of MurNAc 6-phosphate, producing GlcNAc 6-phosphate and D-lactate. Together with AnmK, is also required for the utilization of anhydro-N-acetylmuramic acid (anhMurNAc) either imported from the medium or derived from its own cell wall murein, and thus plays a role in cell wall recycling. This chain is N-acetylmuramic acid 6-phosphate etherase, found in Erwinia tasmaniensis (strain DSM 17950 / CFBP 7177 / CIP 109463 / NCPPB 4357 / Et1/99).